Reading from the N-terminus, the 459-residue chain is ATP synthase subunit beta (459 aa).

148-155 contacts ATP; the sequence is GGAGVGKT.

It belongs to the ATPase alpha/beta chains family. As to quaternary structure, F-type ATPases have 2 components, CF(1) - the catalytic core - and CF(0) - the membrane proton channel. CF(1) has five subunits: alpha(3), beta(3), gamma(1), delta(1), epsilon(1). CF(0) has three main subunits: a(1), b(2) and c(9-12). The alpha and beta chains form an alternating ring which encloses part of the gamma chain. CF(1) is attached to CF(0) by a central stalk formed by the gamma and epsilon chains, while a peripheral stalk is formed by the delta and b chains.

It is found in the cell inner membrane. It carries out the reaction ATP + H2O + 4 H(+)(in) = ADP + phosphate + 5 H(+)(out). In terms of biological role, produces ATP from ADP in the presence of a proton gradient across the membrane. The catalytic sites are hosted primarily by the beta subunits. This is ATP synthase subunit beta from Burkholderia mallei (strain NCTC 10229).